The sequence spans 687 residues: Phage-like element PBSX protein XkdV (687 aa).

It to B.subtilis YqcC.

In Bacillus subtilis (strain 168), this protein is Phage-like element PBSX protein XkdV (xkdV).